The chain runs to 166 residues: Small ribosomal subunit protein uS4 (166 aa).

The 63-residue stretch at 102–164 folds into the S4 RNA-binding domain; sequence RRLQTIVWRK…HPSCLEVEKE (63 aa).

This sequence belongs to the universal ribosomal protein uS4 family. Part of the 30S ribosomal subunit. Contacts protein S5. The interaction surface between S4 and S5 is involved in control of translational fidelity.

In terms of biological role, one of the primary rRNA binding proteins, it binds directly to 16S rRNA where it nucleates assembly of the body of the 30S subunit. Functionally, with S5 and S12 plays an important role in translational accuracy. This Korarchaeum cryptofilum (strain OPF8) protein is Small ribosomal subunit protein uS4.